The chain runs to 206 residues: Dephospho-CoA kinase (206 aa).

Residues 4-200 (TVALTGGIGS…ASYLKLASQF (197 aa)) form the DPCK domain. Residue 12–17 (GSGKST) coordinates ATP.

It belongs to the CoaE family.

The protein localises to the cytoplasm. It carries out the reaction 3'-dephospho-CoA + ATP = ADP + CoA + H(+). It participates in cofactor biosynthesis; coenzyme A biosynthesis; CoA from (R)-pantothenate: step 5/5. Functionally, catalyzes the phosphorylation of the 3'-hydroxyl group of dephosphocoenzyme A to form coenzyme A. This chain is Dephospho-CoA kinase, found in Salmonella typhimurium (strain LT2 / SGSC1412 / ATCC 700720).